We begin with the raw amino-acid sequence, 401 residues long: Calcium-responsive transcription coactivator (401 aa).

The tract at residues 1 to 148 is N-terminal auto-inhibitory domain; necessary for interaction with SMARCA4/BRG1; sequence MSVAFASARP…TLPTTSMSMS (148 aa). An SH2-binding motif is present at residues 50 to 53; the sequence is YQQI. 2 disordered regions span residues 72-171 and 214-401; these read QSLL…VPMQ and TRAR…NYQQ. Over residues 85–106 the composition is skewed to low complexity; that stretch reads LGPGALSQSGSSQGLHPQGSLS. Residues 128–137 show a composition bias toward polar residues; sequence NHVSMQQTAQ. The segment covering 138–149 has biased composition (low complexity); sequence STLPTTSMSMSG. The interval 149–237 is methionine-rich intra-molecular domain; it reads GSGHGTGPGY…GGSMMGQRPM (89 aa). Residues 251-322 are MFD domain; sequence YLGQEEYYSE…SQYSQQQAGY (72 aa). 2 stretches are compositionally biased toward polar residues: residues 260-276 and 285-294; these read EQYS…SQQY and AYQQSSYTEQ. A compositionally biased stretch (basic and acidic residues) spans 295–304; sequence SYDRSFEDPT. Residues 310 to 374 show a composition bias toward low complexity; it reads GGNSQYSQQQ…QGQGQQYGSY (65 aa). Residues 339-401 form a necessary for nuclear localization region; sequence NQQSYPGQQQ…EQGQYGNYQQ (63 aa). Positions 358–361 match the SH2-binding motif; the sequence is SQYS. The span at 375-387 shows a compositional bias: polar residues; it reads RTSQTGPSAQQQR. Residues 376-384 carry the SH3-binding motif; that stretch reads TSQTGPSAQ. The segment covering 389–401 has biased composition (low complexity); sequence YGYEQGQYGNYQQ. Positions 392–401 are necessary for interaction with CREBBP and for the recruitment of CREBBP to the nuclear bodies; the sequence is EQGQYGNYQQ. An SH2-binding motif is present at residues 396 to 399; sequence YGNY.

It belongs to the SS18 family. In terms of assembly, homodimer. Dimerization may be necessary for its function in neuronal dendritic development. Interacts (via C-terminus) with CREBBP (via N-terminus), EP300 and SMARCA4/BRG1. Interacts with the nBAF complex. Association with CREBBP facilitates transcription while the association with SMARCA4/BRG1 suppresses CREST-mediated transcription in resting neurons. As to expression, brain (at protein level). Also found in the heart, liver, kidney and testis.

It localises to the nucleus. Its subcellular location is the chromosome. The protein resides in the centromere. The protein localises to the kinetochore. Transcriptional activator which is required for calcium-dependent dendritic growth and branching in cortical neurons. Recruits CREB-binding protein (CREBBP) to nuclear bodies. Component of the CREST-BRG1 complex, a multiprotein complex that regulates promoter activation by orchestrating a calcium-dependent release of a repressor complex and a recruitment of an activator complex. In resting neurons, transcription of the c-FOS promoter is inhibited by BRG1-dependent recruitment of a phospho-RB1-HDAC1 repressor complex. Upon calcium influx, RB1 is dephosphorylated by calcineurin, which leads to release of the repressor complex. At the same time, there is increased recruitment of CREBBP to the promoter by a CREST-dependent mechanism, which leads to transcriptional activation. The CREST-BRG1 complex also binds to the NR2B promoter, and activity-dependent induction of NR2B expression involves a release of HDAC1 and recruitment of CREBBP. This chain is Calcium-responsive transcription coactivator (Ss18l1), found in Rattus norvegicus (Rat).